A 473-amino-acid polypeptide reads, in one-letter code: MAVKTYNAGVKDYRNTYWEPDYSVKDTDILAVFKITPQAGVDREEAPAAVAAESSTGTWTTVWTDLLTDLDYYKGRAYRIEDVPGDDTCFYAFIAYPIDLFEEGSVVNVFTSLVGNVFGFKAVRALRLEDVRFPIAYVKTCGGPPHGIQVERDIMNKYGRPLLGCTIKPKLGLSAKNYGRACYEGLRGGLDFTKDDENVNSQPFMRWRQRFDFVMEAIQKAEAETGERKGHYLNVTAPTPEEMYKRAEYAKEIGAPIIMHDYITGGFCANTGLANWCRDNGMLLHIHRAMHRVLDRNPHHGIHFRVLTKILRLSGGDHLHSGTVVGKLEGDREATLGWIDIMRDRFIKEDRSRGIFFDQDWGSMPGVMPVASGGIHVWHMPALVTIFGDDSVLQFGGGTLGHPWGNAKGAAANRVALEACVEARNRGVAIEKEGKAVLTEAAKHSPELKIAMETWKEIKSEFDTVDKLDVAHK.

The substrate site is built by N116 and T166. K168 acts as the Proton acceptor in catalysis. K170 is a substrate binding site. Residues K194, D196, and E197 each coordinate Mg(2+). K194 bears the N6-carboxylysine mark. H287 acts as the Proton acceptor in catalysis. The substrate site is built by R288, H320, and S372.

The protein belongs to the RuBisCO large chain family. Type I subfamily. Heterohexadecamer of 8 large chains and 8 small chains. Mg(2+) serves as cofactor.

The catalysed reaction is 2 (2R)-3-phosphoglycerate + 2 H(+) = D-ribulose 1,5-bisphosphate + CO2 + H2O. It carries out the reaction D-ribulose 1,5-bisphosphate + O2 = 2-phosphoglycolate + (2R)-3-phosphoglycerate + 2 H(+). In terms of biological role, ruBisCO catalyzes two reactions: the carboxylation of D-ribulose 1,5-bisphosphate, the primary event in carbon dioxide fixation, as well as the oxidative fragmentation of the pentose substrate. Both reactions occur simultaneously and in competition at the same active site. In Acidithiobacillus ferrooxidans (Thiobacillus ferrooxidans), this protein is Ribulose bisphosphate carboxylase large chain 2.